We begin with the raw amino-acid sequence, 418 residues long: Voltage-gated ClC-type chloride channel ClcB (418 aa).

Position 1 (M1) is a topological domain, cytoplasmic. The chain crosses the membrane as a helical span at residues 2 to 22 (FHRLLIATVVGILAAFAVAGF). Residues 23–53 (RHAMLLLEWLFLNNDSGSLVNAATNLSPWRR) lie on the Periplasmic side of the membrane. A helical membrane pass occupies residues 54–74 (LLTPALGGLAAGLLLMGWQKF). Over 75-145 (TQQRPHAPTD…QRFTPRQEWK (71 aa)) the chain is Cytoplasmic. A helical transmembrane segment spans residues 146-166 (LWIACGAAAGMAAAYRAPLAG). Residues 167 to 177 (SLFIAEVLFGT) lie on the Periplasmic side of the membrane. Residues 178 to 200 (MMLASLGPVIISAVVALLVSNLI) traverse the membrane as a helical segment. Over 201-221 (NHSDALLYNVQLSVTVQARDY) the chain is Cytoplasmic. A helical transmembrane segment spans residues 222 to 242 (ALIISTGVLAGLCGPLLLTLM). At 243–257 (NACHRGFVSLKLAPP) the chain is on the periplasmic side. Residues 258 to 278 (WQLALGGLIVGLLSLFTPAVW) traverse the membrane as a helical segment. Residues 279–290 (GNGYSTVQSFLT) are Cytoplasmic-facing. The chain crosses the membrane as a helical span at residues 291–311 (APPLLMIIAGIFLCKLCAVLA). The Periplasmic segment spans residues 312-315 (SSGS). The chain crosses the membrane as a helical span at residues 316–336 (GAPGGVFTPTLFIGLAIGMLY). Residues 337 to 351 (GRSLGLWFPDGEEIT) lie on the Cytoplasmic side of the membrane. The helical transmembrane segment at 352 to 372 (LLLGLTGMATLLAATTHAPIM) threads the bilayer. The Periplasmic segment spans residues 373–379 (STLMICE). A helical membrane pass occupies residues 380–400 (MTGEYQLLPGLLIACVIASVI). The Cytoplasmic segment spans residues 401 to 418 (SRTLHRDSIYRQHTAQHS).

The protein belongs to the chloride channel (TC 2.A.49) family. ClcB subfamily.

Its subcellular location is the cell inner membrane. In terms of biological role, probably acts as an electrical shunt for an outwardly-directed proton pump that is linked to amino acid decarboxylation, as part of the extreme acid resistance (XAR) response. This Escherichia coli (strain K12) protein is Voltage-gated ClC-type chloride channel ClcB (clcB).